The sequence spans 354 residues: Glutamine synthetase (354 aa).

A GS beta-grasp domain is found at 22 to 101 (VQAEYVWIDG…VLAETFNNDG (80 aa)). A GS catalytic domain is found at 108–354 (HRHHTKKVMD…IIVETTVLDK (247 aa)).

The protein belongs to the glutamine synthetase family. Homooctamer.

Its subcellular location is the cytoplasm. The enzyme catalyses L-glutamate + NH4(+) + ATP = L-glutamine + ADP + phosphate + H(+). This Suillus bovinus (Jersey cow bolete) protein is Glutamine synthetase (GLNA).